Consider the following 431-residue polypeptide: Nuclear bridge Ish domain protein les1 (431 aa).

An N-terminal signal peptide occupies residues 1-21 (MQPRFLLHGALLALGIQLCLS).

It localises to the nucleus inner membrane. Inner nuclear envelope protein involved in nuclear fission, which is achieved via local disassembly of nuclear pores within the narrow bridge that links segregating daughter nuclei. Les1 restricts the process of local nuclear envelope breakdown to the bridge midzone to prevent the leakage of material from daughter nuclei during mitosis. This chain is Nuclear bridge Ish domain protein les1, found in Schizosaccharomyces pombe (strain 972 / ATCC 24843) (Fission yeast).